Consider the following 65-residue polypeptide: Small ribosomal subunit protein bS21 (65 aa).

Over residues glutamate 43–alanine 52 the composition is skewed to basic and acidic residues. Positions glutamate 43–aspartate 65 are disordered. Over residues arginine 53–aspartate 65 the composition is skewed to basic residues.

Belongs to the bacterial ribosomal protein bS21 family.

In Koribacter versatilis (strain Ellin345), this protein is Small ribosomal subunit protein bS21.